A 403-amino-acid polypeptide reads, in one-letter code: uncharacterized protein (403 aa).

Over residues 55–88 the composition is skewed to polar residues; it reads LTGSPNPQATPKQENKSNFFSEKQSVRENGNSSA. Residues 55-95 form a disordered region; the sequence is LTGSPNPQATPKQENKSNFFSEKQSVRENGNSSAGEKKQKW. Serine 58 bears the Phosphoserine mark. The region spanning 113-177 is the J domain; it reads QYYEILDLKK…NLRAHYDRTG (65 aa). The helical transmembrane segment at 263 to 283 threads the bilayer; sequence SIFYQLLPLIVVILFAFLSNF.

It localises to the endoplasmic reticulum membrane. This is an uncharacterized protein from Schizosaccharomyces pombe (strain 972 / ATCC 24843) (Fission yeast).